The primary structure comprises 235 residues: Putative homeobox-leucine zipper protein ATHB-51 (235 aa).

Residues 74–133 (EMIKKKRLTSGQLASLERSFQEEIKLDSDRKVKLSRELGLQPRQIAVWFQNRRARWKAKQ) constitute a DNA-binding region (homeobox). Residues 134-162 (LEQLYDSLRQEYDVVSREKQMLHDEVKKL) are leucine-zipper.

Belongs to the HD-ZIP homeobox family. Class I subfamily. As to expression, widely expressed.

It localises to the nucleus. In terms of biological role, putative transcription factor. The sequence is that of Putative homeobox-leucine zipper protein ATHB-51 (ATHB-51) from Arabidopsis thaliana (Mouse-ear cress).